The following is a 264-amino-acid chain: Small ribosomal subunit protein eS1 (264 aa).

Belongs to the eukaryotic ribosomal protein eS1 family. In terms of assembly, component of the small ribosomal subunit. Mature ribosomes consist of a small (40S) and a large (60S) subunit. The 40S subunit contains about 33 different proteins and 1 molecule of RNA (18S). The 60S subunit contains about 49 different proteins and 3 molecules of RNA (25S, 5.8S and 5S).

It is found in the cytoplasm. This Babesia bovis protein is Small ribosomal subunit protein eS1.